The sequence spans 300 residues: Ribosomal protein bS6--L-glutamate ligase (300 aa).

Positions 104 to 287 (MQLLARQGID…IAGKMIRWIE (184 aa)) constitute an ATP-grasp domain. ATP-binding positions include K141, 178–179 (EY), D187, and 211–213 (RSN). Mg(2+) contacts are provided by D248, E260, and N262. 3 residues coordinate Mn(2+): D248, E260, and N262.

It belongs to the RimK family. Requires Mg(2+) as cofactor. Mn(2+) is required as a cofactor.

Its function is as follows. An L-glutamate ligase that catalyzes the ATP-dependent post-translational addition of glutamate residues to the C-terminus of ribosomal protein bS6 (RpsF). Is also able to catalyze the synthesis of poly-alpha-glutamate in vitro, via ATP hydrolysis from unprotected glutamate as substrate. The number of glutamate residues added to either RpsF or to poly-alpha-glutamate changes with pH. The protein is Ribosomal protein bS6--L-glutamate ligase of Shigella dysenteriae serotype 1 (strain Sd197).